The following is a 117-amino-acid chain: UPF0125 protein VV0820 (117 aa).

Residues 90-117 form a disordered region; sequence RKRAEQAKESGAADPVTGGKPSPLRKAD.

The protein belongs to the UPF0125 (RnfH) family.

In Vibrio vulnificus (strain YJ016), this protein is UPF0125 protein VV0820.